The sequence spans 1194 residues: Multidrug efflux ATP-binding/permease protein BCG_0231 (1194 aa).

The next 6 helical transmembrane spans lie at Leu-20–Val-40, Leu-56–Val-76, Leu-130–Val-150, Trp-153–Ala-173, Phe-258–Phe-278, and Trp-279–Ala-299. Positions Leu-21–Gln-301 constitute an ABC transmembrane type-1 1 domain. The ABC transporter 1 domain maps to Leu-334–Pro-568. Position 367–374 (Gly-367–Ser-374) interacts with ATP. A run of 6 helical transmembrane segments spans residues Ala-628–Ile-648, Val-660–Val-680, Leu-743–Ile-763, Ala-765–Phe-785, Leu-847–Leu-867, and Val-878–Ile-898. Positions Ala-628 to Arg-910 constitute an ABC transmembrane type-1 2 domain. Residues Val-942 to Ala-1177 enclose the ABC transporter 2 domain. Gly-976–Ser-983 is a binding site for ATP.

The protein belongs to the ABC transporter superfamily. Lipid exporter (TC 3.A.1.106) family.

It is found in the cell inner membrane. Its function is as follows. Overexpression increases resistance to chloramphenicol, ampicillin, streptomycin, tetracyclin and vancomycin. The protein is Multidrug efflux ATP-binding/permease protein BCG_0231 of Mycobacterium bovis (strain BCG / Pasteur 1173P2).